Here is a 377-residue protein sequence, read N- to C-terminus: MLRRASFVEVDTSSLRHNFHAAKNAIPKDAHIMAVVKANAYGVGALKASEVFLQEGAHYLGVATLDEALELRSCFPKTPILILGYSPNSNAQMLIDNNLTAMIFSLEQAGVFSQAALKSQKHLKVHLKIDTGMHRLGLEPNFKSIEMIKKIRALNGLEVEGIFTHLSNANANIKTHAKNQMKIFNAFLEQLLDQKIEFQYRHAYNSAGILSLCNNNENRFLNLYRPGIMLYGFYPSNEMKQSCQTILNNVVSLKAKIVQIKRVKKGEFVGYGKHFYTNEETLIGTLALGYADGLVRDLGNRIQVAINNQLAPLIGKVCMDQCFVKLDGIEAKEGDEVILFGDKSTKANDANEIAMLLNTIPYETISTLSKRLERVYV.

K37 functions as the Proton acceptor; specific for D-alanine in the catalytic mechanism. K37 bears the N6-(pyridoxal phosphate)lysine mark. R135 serves as a coordination point for substrate. Y271 serves as the catalytic Proton acceptor; specific for L-alanine. M319 contributes to the substrate binding site.

It belongs to the alanine racemase family. Requires pyridoxal 5'-phosphate as cofactor.

The catalysed reaction is L-alanine = D-alanine. The protein operates within amino-acid biosynthesis; D-alanine biosynthesis; D-alanine from L-alanine: step 1/1. Catalyzes the interconversion of L-alanine and D-alanine. May also act on other amino acids. The polypeptide is Alanine racemase (alr) (Helicobacter acinonychis (strain Sheeba)).